The primary structure comprises 222 residues: Large ribosomal subunit protein uL4 (222 aa).

Residues 42-100 (AAGRQGTHSTKTRGEVRGGGKKPYRQKGTGRARQGSVRAPQFTGGGTVHGPKPRDYAQR) form a disordered region. Positions 60–71 (GGKKPYRQKGTG) are enriched in basic residues.

The protein belongs to the universal ribosomal protein uL4 family. As to quaternary structure, part of the 50S ribosomal subunit.

One of the primary rRNA binding proteins, this protein initially binds near the 5'-end of the 23S rRNA. It is important during the early stages of 50S assembly. It makes multiple contacts with different domains of the 23S rRNA in the assembled 50S subunit and ribosome. Functionally, forms part of the polypeptide exit tunnel. In Thermobifida fusca (strain YX), this protein is Large ribosomal subunit protein uL4.